Here is a 181-residue protein sequence, read N- to C-terminus: Histone deacetylase complex subunit SAP30L (181 aa).

The segment at 26–74 (CCLIDGGERCPRPAGNASFSKRVQKSISQKKLKLDIDKSVRHLYICDFH) adopts an Atypical zinc-finger fold. Residues 82–103 (RNKRKRKTSDDGGDSPEHETDV) form a disordered region. A Nuclear localization signal (NLS) motif is present at residues 83–88 (NKRKRK). Residues 85 to 87 (RKR) form an important for DNA and phosphoinositide binding region.

Belongs to the SAP30 family. As to quaternary structure, interacts with components of the histone deacetylase complex sin3a, hdac1 and hdac2. Binds histones and nucleosomes.

The protein localises to the nucleus. The protein resides in the nucleolus. Its function is as follows. Functions as a transcription repressor, probably via its interaction with histone deacetylase complexes. Involved in the functional recruitment of the class 1 Sin3-histone deacetylase complex (HDAC) to the nucleolus. Binds DNA, apparently without sequence-specificity, and bends bound double-stranded DNA. Binds phosphoinositol phosphates (phosphoinositol 3-phosphate, phosphoinositol 4-phosphate and phosphoinositol 5-phosphate) via the same basic sequence motif that mediates DNA binding and nuclear import. The protein is Histone deacetylase complex subunit SAP30L (sap30l) of Xenopus tropicalis (Western clawed frog).